We begin with the raw amino-acid sequence, 180 residues long: Protein SPMIP9 (180 aa).

In terms of assembly, microtubule inner protein component of sperm flagellar doublet microtubules.

It is found in the nucleus. The protein resides in the cytoplasm. Its subcellular location is the cytoskeleton. The protein localises to the flagellum axoneme. In terms of biological role, microtubule inner protein (MIP) part of the dynein-decorated doublet microtubules (DMTs) in flagella axoneme. The chain is Protein SPMIP9 (SPMIP9) from Bos taurus (Bovine).